A 288-amino-acid polypeptide reads, in one-letter code: Bis(5'-nucleosyl)-tetraphosphatase, symmetrical (288 aa).

This sequence belongs to the Ap4A hydrolase family.

It carries out the reaction P(1),P(4)-bis(5'-adenosyl) tetraphosphate + H2O = 2 ADP + 2 H(+). Hydrolyzes diadenosine 5',5'''-P1,P4-tetraphosphate to yield ADP. This chain is Bis(5'-nucleosyl)-tetraphosphatase, symmetrical, found in Pseudomonas putida (strain GB-1).